The following is a 391-amino-acid chain: Alkanesulfonate monooxygenase (391 aa).

It belongs to the SsuD family.

It carries out the reaction an alkanesulfonate + FMNH2 + O2 = an aldehyde + FMN + sulfite + H2O + 2 H(+). Catalyzes the desulfonation of aliphatic sulfonates. This is Alkanesulfonate monooxygenase from Rhodopseudomonas palustris (strain TIE-1).